The sequence spans 274 residues: tRNA (guanine-N(1)-)-methyltransferase (274 aa).

Residues Gly116 and 140 to 145 contribute to the S-adenosyl-L-methionine site; that span reads LGDYVL.

The protein belongs to the RNA methyltransferase TrmD family. As to quaternary structure, homodimer.

It is found in the cytoplasm. It carries out the reaction guanosine(37) in tRNA + S-adenosyl-L-methionine = N(1)-methylguanosine(37) in tRNA + S-adenosyl-L-homocysteine + H(+). In terms of biological role, specifically methylates guanosine-37 in various tRNAs. The sequence is that of tRNA (guanine-N(1)-)-methyltransferase from Arthrobacter sp. (strain FB24).